A 290-amino-acid chain; its full sequence is 4-diphosphocytidyl-2-C-methyl-D-erythritol kinase (290 aa).

Lysine 14 is a catalytic residue. Position 103–113 (103–113 (PMGGGLGGGSS)) interacts with ATP. The active site involves aspartate 145.

Belongs to the GHMP kinase family. IspE subfamily. In terms of assembly, homodimer.

It catalyses the reaction 4-CDP-2-C-methyl-D-erythritol + ATP = 4-CDP-2-C-methyl-D-erythritol 2-phosphate + ADP + H(+). The protein operates within isoprenoid biosynthesis; isopentenyl diphosphate biosynthesis via DXP pathway; isopentenyl diphosphate from 1-deoxy-D-xylulose 5-phosphate: step 3/6. Its function is as follows. Catalyzes the phosphorylation of the position 2 hydroxy group of 4-diphosphocytidyl-2C-methyl-D-erythritol. This is 4-diphosphocytidyl-2-C-methyl-D-erythritol kinase from Pectobacterium carotovorum subsp. carotovorum (strain PC1).